The sequence spans 198 residues: 3-isopropylmalate dehydratase small subunit (198 aa).

It belongs to the LeuD family. LeuD type 1 subfamily. Heterodimer of LeuC and LeuD.

It catalyses the reaction (2R,3S)-3-isopropylmalate = (2S)-2-isopropylmalate. The protein operates within amino-acid biosynthesis; L-leucine biosynthesis; L-leucine from 3-methyl-2-oxobutanoate: step 2/4. Functionally, catalyzes the isomerization between 2-isopropylmalate and 3-isopropylmalate, via the formation of 2-isopropylmaleate. This is 3-isopropylmalate dehydratase small subunit from Colwellia psychrerythraea (strain 34H / ATCC BAA-681) (Vibrio psychroerythus).